A 223-amino-acid chain; its full sequence is Thiamine-phosphate synthase (223 aa).

4-amino-2-methyl-5-(diphosphooxymethyl)pyrimidine contacts are provided by residues 37–41 and Asp-72; that span reads QFREK. Positions 73 and 92 each coordinate Mg(2+). A 4-amino-2-methyl-5-(diphosphooxymethyl)pyrimidine-binding site is contributed by Ser-110. 2-[(2R,5Z)-2-carboxy-4-methylthiazol-5(2H)-ylidene]ethyl phosphate is bound at residue 136 to 138; it reads TQS. Lys-139 lines the 4-amino-2-methyl-5-(diphosphooxymethyl)pyrimidine pocket. Residues Gly-168 and 188–189 each bind 2-[(2R,5Z)-2-carboxy-4-methylthiazol-5(2H)-ylidene]ethyl phosphate; that span reads IS.

This sequence belongs to the thiamine-phosphate synthase family. Requires Mg(2+) as cofactor.

The catalysed reaction is 2-[(2R,5Z)-2-carboxy-4-methylthiazol-5(2H)-ylidene]ethyl phosphate + 4-amino-2-methyl-5-(diphosphooxymethyl)pyrimidine + 2 H(+) = thiamine phosphate + CO2 + diphosphate. It carries out the reaction 2-(2-carboxy-4-methylthiazol-5-yl)ethyl phosphate + 4-amino-2-methyl-5-(diphosphooxymethyl)pyrimidine + 2 H(+) = thiamine phosphate + CO2 + diphosphate. It catalyses the reaction 4-methyl-5-(2-phosphooxyethyl)-thiazole + 4-amino-2-methyl-5-(diphosphooxymethyl)pyrimidine + H(+) = thiamine phosphate + diphosphate. It participates in cofactor biosynthesis; thiamine diphosphate biosynthesis; thiamine phosphate from 4-amino-2-methyl-5-diphosphomethylpyrimidine and 4-methyl-5-(2-phosphoethyl)-thiazole: step 1/1. Functionally, condenses 4-methyl-5-(beta-hydroxyethyl)thiazole monophosphate (THZ-P) and 2-methyl-4-amino-5-hydroxymethyl pyrimidine pyrophosphate (HMP-PP) to form thiamine monophosphate (TMP). The protein is Thiamine-phosphate synthase of Streptococcus agalactiae serotype III (strain NEM316).